The sequence spans 564 residues: Dihydropyrimidinase-related protein 5 (564 aa).

Phosphothreonine is present on residues Thr-509 and Thr-514. Phosphoserine is present on residues Ser-532 and Ser-538. Position 559 is an omega-N-methylarginine (Arg-559).

Belongs to the metallo-dependent hydrolases superfamily. Hydantoinase/dihydropyrimidinase family. As to quaternary structure, homotetramer, and heterotetramer with other DPYS-like proteins. Interacts with DPYSL2, DPYSL3 and DPYSL4. Interacts with MAP2 and TUBB3.

It is found in the cytoplasm. Functionally, involved in the negative regulation of dendrite outgrowth. This Homo sapiens (Human) protein is Dihydropyrimidinase-related protein 5 (DPYSL5).